The chain runs to 129 residues: Basic blue protein (129 aa).

The N-terminal stretch at 1 to 33 is a signal peptide; the sequence is MAKGRGSASWSARAIVTLMAVSVLLLQADYVQA. A Phytocyanin domain is found at 34 to 129; it reads ATYTVGDSGI…SDMKIAVTAV (96 aa). Cu cation contacts are provided by H72, C112, H117, and M122. C85 and C118 form a disulfide bridge.

In terms of tissue distribution, expressed in the inflorescence and in the transmitting tract of the pistil. Detected in roots, stems, cauline leaves, cotyledons, hypocotyls, guard cells, pistils, sepals, stamen filaments and vascular bundles of roots but not of leaves. Not expressed in petals, anthers or pollen.

Its subcellular location is the secreted. It is found in the extracellular space. The protein localises to the extracellular matrix. In terms of biological role, forms a concentration gradient along the pollen tube growth path, with a lower level in the stigma papilla cell wall and a higher level in the transmitting tract extracellular matix of the style. The polypeptide is Basic blue protein (ARPN) (Arabidopsis thaliana (Mouse-ear cress)).